The sequence spans 426 residues: Histidine--tRNA ligase (426 aa).

This sequence belongs to the class-II aminoacyl-tRNA synthetase family.

The protein localises to the cytoplasm. The catalysed reaction is tRNA(His) + L-histidine + ATP = L-histidyl-tRNA(His) + AMP + diphosphate + H(+). The polypeptide is Histidine--tRNA ligase (Saccharolobus shibatae (strain ATCC 51178 / DSM 5389 / JCM 8931 / NBRC 15437 / B12) (Sulfolobus shibatae)).